Here is a 220-residue protein sequence, read N- to C-terminus: Tumor protein D54 (220 aa).

The residue at position 1 (Met1) is an N-acetylmethionine. Polar residues predominate over residues 1–14 (MDSASQDINLNSPN). A disordered region spans residues 1–26 (MDSASQDINLNSPNKGVLSDFMTDVP). Phosphoserine occurs at positions 3, 12, and 19. The stretch at 40-82 (GLTEVEEEELRAELAKVEEEIVTLRQVLAAKERHCGELKRRLG) forms a coiled coil. 4 positions are modified to phosphoserine: Ser96, Ser149, Ser168, and Ser175. At Thr177 the chain carries Phosphothreonine. The residue at position 180 (Ser180) is a Phosphoserine. Thr187 carries the phosphothreonine modification. Residues 189–220 (KSKVVGGRENGSDTLPSSPGSGDQTLPDHAPF) are disordered. Polar residues predominate over residues 200–212 (SDTLPSSPGSGDQ). Phosphoserine is present on residues Ser206 and Ser209.

This sequence belongs to the TPD52 family. Forms a homodimer or heterodimer with other members of the family. Interacts with MAL2.

This chain is Tumor protein D54 (Tpd52l2), found in Rattus norvegicus (Rat).